Here is a 514-residue protein sequence, read N- to C-terminus: Membrane-bound lytic murein transglycosylase F (514 aa).

The first 30 residues, 1–30 (MKKLKINYLFIGILTLLLAAALWPSIPWFG), serve as a signal peptide directing secretion. The segment at 31-269 (KTENHIAAIQ…RIEEKYLGHG (239 aa)) is non-LT domain. The tract at residues 270–514 (DDFDYVDTRS…LFTPQKKEEK (245 aa)) is LT domain. Residue E314 is part of the active site.

This sequence in the N-terminal section; belongs to the bacterial solute-binding protein 3 family. In the C-terminal section; belongs to the transglycosylase Slt family.

The protein resides in the cell outer membrane. It catalyses the reaction Exolytic cleavage of the (1-&gt;4)-beta-glycosidic linkage between N-acetylmuramic acid (MurNAc) and N-acetylglucosamine (GlcNAc) residues in peptidoglycan, from either the reducing or the non-reducing ends of the peptidoglycan chains, with concomitant formation of a 1,6-anhydrobond in the MurNAc residue.. Functionally, murein-degrading enzyme that degrades murein glycan strands and insoluble, high-molecular weight murein sacculi, with the concomitant formation of a 1,6-anhydromuramoyl product. Lytic transglycosylases (LTs) play an integral role in the metabolism of the peptidoglycan (PG) sacculus. Their lytic action creates space within the PG sacculus to allow for its expansion as well as for the insertion of various structures such as secretion systems and flagella. This chain is Membrane-bound lytic murein transglycosylase F, found in Salmonella typhimurium (strain LT2 / SGSC1412 / ATCC 700720).